The sequence spans 401 residues: MRKELWLGLLLSSQAVLSTIYYKETFEPDWETRWTHSTAKSDYGKFKLTSGKFYGDKAKDAGIQTSQDAKFYAISSPIASSFSNEGKDLVLQFSVKHEQDIDCGGGYLKLLPSVDAAKFTGDTPYHIMFGPDICGATKKIHFILTYKGKNLLWKKEPRCETDTLSHTYTAVIKADRTYEVLVDQVKKESGTLEEDWEILKPKTIPDPEDKKPADWVDEPDMVDPEDKKPEDWDKEPAQIPDPDATQPDDWDEEEDGKWEAPMISNPKYKGEWKAKKIPNPAYKGVWKPRDIPNPEYEADDKVHIFDEIAAVGFDLWQVKSGTIFDNIIVTDSLAEAKAFYDQTNGATKDAEKKAFDSAEADKRKKEEDERKKQEEEEKKTAEEDEDDDDEEEEEDDKKDEL.

The N-terminal stretch at 1 to 18 (MRKELWLGLLLSSQAVLS) is a signal peptide. Cys103 and Cys134 are oxidised to a cystine. An alpha-D-glucoside is bound by residues Tyr107, Lys109, Tyr125, and Asp132. A run of 7 repeats spans residues 187 to 198 (KESGTLEEDWEI), 206 to 217 (DPEDKKPADWVD), 223 to 234 (DPEDKKPEDWDK), 241 to 252 (DPDATQPDDWDE), 256 to 266 (GKWEAPMISNP), 270 to 280 (GEWKAKKIPNP), and 284 to 294 (GVWKPRDIPNP). The interval 187–252 (KESGTLEEDW…DATQPDDWDE (66 aa)) is 4 X approximate repeats. 2 stretches are compositionally biased toward basic and acidic residues: residues 199 to 214 (LKPK…KPAD) and 224 to 236 (PEDK…DKEP). The segment at 199-263 (LKPKTIPDPE…EDGKWEAPMI (65 aa)) is disordered. The span at 246–256 (QPDDWDEEEDG) shows a compositional bias: acidic residues. Residues 256-294 (GKWEAPMISNPKYKGEWKAKKIPNPAYKGVWKPRDIPNP) are 3 X approximate repeats. Asp314 is an an alpha-D-glucoside binding site. The tract at residues 341–401 (DQTNGATKDA…EEEDDKKDEL (61 aa)) is disordered. Residues 348-381 (KDAEKKAFDSAEADKRKKEEDERKKQEEEEKKTA) show a composition bias toward basic and acidic residues. A compositionally biased stretch (acidic residues) spans 382-401 (EEDEDDDDEEEEEDDKKDEL). Residues 398 to 401 (KDEL) carry the Prevents secretion from ER motif.

It belongs to the calreticulin family.

The protein localises to the endoplasmic reticulum lumen. Its function is as follows. Molecular calcium-binding chaperone promoting folding, oligomeric assembly and quality control in the ER via the calreticulin/calnexin cycle. This lectin may interact transiently with almost all of the monoglucosylated glycoproteins that are synthesized in the ER. The protein is Calreticulin of Euglena gracilis.